Reading from the N-terminus, the 24-residue chain is Sperm protamine P3 (24 aa).

The tract at residues 1 to 24 (RRRRRRRRHRRRRGRRGRRSRGRR) is disordered.

Testis.

The protein resides in the nucleus. The protein localises to the chromosome. In terms of biological role, protamines substitute for histones in the chromatin of sperm during the haploid phase of spermatogenesis. They compact sperm DNA into a highly condensed, stable and inactive complex. This is Sperm protamine P3 from Octopus vulgaris (Common octopus).